A 183-amino-acid polypeptide reads, in one-letter code: uncharacterized protein (183 aa).

The protein belongs to the EUO family.

This is an uncharacterized protein from Chlamydia trachomatis serovar D (strain ATCC VR-885 / DSM 19411 / UW-3/Cx).